We begin with the raw amino-acid sequence, 253 residues long: Glucosamine-6-phosphate deaminase (253 aa).

Asp-65 acts as the Proton acceptor; for enolization step in catalysis. Asn-133 (for ring-opening step) is an active-site residue. His-135 serves as the catalytic Proton acceptor; for ring-opening step. Glu-140 acts as the For ring-opening step in catalysis.

It belongs to the glucosamine/galactosamine-6-phosphate isomerase family. NagB subfamily.

It carries out the reaction alpha-D-glucosamine 6-phosphate + H2O = beta-D-fructose 6-phosphate + NH4(+). The protein operates within amino-sugar metabolism; N-acetylneuraminate degradation; D-fructose 6-phosphate from N-acetylneuraminate: step 5/5. Catalyzes the reversible isomerization-deamination of glucosamine 6-phosphate (GlcN6P) to form fructose 6-phosphate (Fru6P) and ammonium ion. The sequence is that of Glucosamine-6-phosphate deaminase from Corynebacterium glutamicum (strain ATCC 13032 / DSM 20300 / JCM 1318 / BCRC 11384 / CCUG 27702 / LMG 3730 / NBRC 12168 / NCIMB 10025 / NRRL B-2784 / 534).